The following is a 437-amino-acid chain: UDP-N-acetylmuramoylalanine--D-glutamate ligase (437 aa).

112–118 (GSNGKST) serves as a coordination point for ATP.

This sequence belongs to the MurCDEF family.

It is found in the cytoplasm. It carries out the reaction UDP-N-acetyl-alpha-D-muramoyl-L-alanine + D-glutamate + ATP = UDP-N-acetyl-alpha-D-muramoyl-L-alanyl-D-glutamate + ADP + phosphate + H(+). The protein operates within cell wall biogenesis; peptidoglycan biosynthesis. Cell wall formation. Catalyzes the addition of glutamate to the nucleotide precursor UDP-N-acetylmuramoyl-L-alanine (UMA). The sequence is that of UDP-N-acetylmuramoylalanine--D-glutamate ligase (murD) from Haemophilus influenzae (strain ATCC 51907 / DSM 11121 / KW20 / Rd).